A 74-amino-acid chain; its full sequence is Conotoxin MiEr93 (74 aa).

Residues 1 to 22 form the signal peptide; it reads MKLTCVLIIAVLFLTAYQLATA. Positions 23–45 are excised as a propeptide; sequence ASYAKGKQKHRALRPADKHLRLT. Intrachain disulfides connect Cys48–Cys62, Cys55–Cys66, and Cys61–Cys73.

This sequence belongs to the conotoxin O1 superfamily. In terms of tissue distribution, expressed by the venom duct.

It localises to the secreted. This chain is Conotoxin MiEr93, found in Conus miles (Soldier cone).